The chain runs to 37 residues: Large ribosomal subunit protein bL36c (37 aa).

This sequence belongs to the bacterial ribosomal protein bL36 family.

It localises to the plastid. Its subcellular location is the chloroplast. The polypeptide is Large ribosomal subunit protein bL36c (rpl36) (Euglena gracilis).